Consider the following 453-residue polypeptide: Homogentisate 1,2-dioxygenase (453 aa).

H306 (proton acceptor) is an active-site residue. Fe cation contacts are provided by H349 and E355. Homogentisate is bound by residues Y364 and H385. A Fe cation-binding site is contributed by H385.

Belongs to the homogentisate dioxygenase family. Hexamer; dimer of trimers. Fe cation serves as cofactor.

The enzyme catalyses homogentisate + O2 = 4-maleylacetoacetate + H(+). It participates in amino-acid degradation; L-phenylalanine degradation; acetoacetate and fumarate from L-phenylalanine: step 4/6. In terms of biological role, involved in the catabolism of homogentisate (2,5-dihydroxyphenylacetate or 2,5-OH-PhAc), a central intermediate in the degradation of phenylalanine and tyrosine. Catalyzes the oxidative ring cleavage of the aromatic ring of homogentisate to yield maleylacetoacetate. The chain is Homogentisate 1,2-dioxygenase from Rhizobium etli (strain CIAT 652).